The chain runs to 188 residues: FMN-dependent NADPH-azoreductase (188 aa).

Belongs to the azoreductase type 2 family. As to quaternary structure, homotetramer. FMN is required as a cofactor.

Its function is as follows. Catalyzes the reductive cleavage of azo bond in aromatic azo compounds to the corresponding amines. Requires NADPH, but not NADH, as an electron donor for its activity. This Staphylococcus haemolyticus (strain JCSC1435) protein is FMN-dependent NADPH-azoreductase (azo1).